The following is a 589-amino-acid chain: Transmembrane 9 superfamily member 5 (589 aa).

The N-terminal stretch at 1-24 is a signal peptide; that stretch reads MAQFLLTVLQVLLALTFWIGIGSG. Residues 25 to 227 are Lumenal-facing; the sequence is SSNHYNAGDH…SFHPISQKIH (203 aa). A helical transmembrane segment spans residues 228-248; that stretch reads FFSFLNSITVVVLLIGLISFL. Topologically, residues 249-291 are cytoplasmic; that stretch reads FMRHLKNELRSYSIGDEEERKEAGWKLVHSDVFRCPRNISWLC. Residues 292-312 form a helical membrane-spanning segment; sequence AILGTGTQLLILIIALFALAF. Over 313-321 the chain is Lumenal; sequence TGFLYPYNR. Residues 322–342 form a helical membrane-spanning segment; that stretch reads GMLLTSLVIMYTLTSIVAGYT. Residues 343–361 lie on the Cytoplasmic side of the membrane; that stretch reads STSFHSQFEGNKQKRSVRL. The chain crosses the membrane as a helical span at residues 362–382; that stretch reads AGILYPVPFFIILSVLNTVAI. At 383–394 the chain is on the lumenal side; it reads TYGATAALPFGT. Residues 395-415 traverse the membrane as a helical segment; sequence IVIIILIFTLLNIPFLMLGGV. Topologically, residues 416–450 are cytoplasmic; sequence LGNRFGLLEFQPPSAVKRNPREIPPQNWYRRKLYQ. A helical membrane pass occupies residues 451–471; the sequence is VFLGGFVPFSAVVLEWHQLYA. Over 472 to 482 the chain is Lumenal; that stretch reads SLWGFKIYTSP. Residues 483–503 traverse the membrane as a helical segment; it reads GIMLFTFIVLIFLSSSVGIIL. Topologically, residues 504-518 are cytoplasmic; sequence TYIQLSGEDHEWWWR. A helical membrane pass occupies residues 519–539; sequence SILCGGFTAVFMYGYGVLFYL. Topologically, residues 540 to 550 are lumenal; sequence RSDMTGFLQLS. The chain crosses the membrane as a helical span at residues 551 to 571; the sequence is FYLGYTALLCYALFLVLGTIS. Topologically, residues 572–589 are cytoplasmic; sequence FLASLMFIRHIYRSVKLE. The Endoplasmic reticulum export signal motif lies at 578 to 583; sequence FIRHIY. The Golgi retention signal motif lies at 587-589; that stretch reads KLE.

The protein belongs to the nonaspanin (TM9SF) (TC 9.A.2) family. As to expression, expressed in the root cap and in giant cells.

The protein resides in the endosome membrane. The protein localises to the golgi apparatus membrane. The protein is Transmembrane 9 superfamily member 5 of Arabidopsis thaliana (Mouse-ear cress).